A 353-amino-acid chain; its full sequence is Rhodopsin (353 aa).

Over methionine 1–alanine 36 the chain is Extracellular. 2 N-linked (GlcNAc...) asparagine glycosylation sites follow: asparagine 2 and asparagine 15. The chain crosses the membrane as a helical span at residues tyrosine 37–valine 61. At threonine 62–asparagine 73 the chain is on the cytoplasmic side. A helical membrane pass occupies residues tyrosine 74 to tyrosine 96. Topologically, residues threonine 97–cysteine 110 are extracellular. Cysteine 110 and cysteine 187 are disulfide-bonded. The chain crosses the membrane as a helical span at residues asparagine 111–valine 133. Positions glutamate 134–tryptophan 136 match the 'Ionic lock' involved in activated form stabilization motif. Topologically, residues glutamate 134–histidine 152 are cytoplasmic. Residues alanine 153–valine 173 traverse the membrane as a helical segment. The Extracellular portion of the chain corresponds to glycine 174 to serine 202. A glycan (N-linked (GlcNAc...) asparagine) is linked at asparagine 200. The helical transmembrane segment at phenylalanine 203–glycine 224 threads the bilayer. The Cytoplasmic segment spans residues arginine 225–arginine 252. A helical transmembrane segment spans residues methionine 253–tyrosine 274. At isoleucine 275–valine 286 the chain is on the extracellular side. The helical transmembrane segment at phenylalanine 287–leucine 308 threads the bilayer. Position 296 is an N6-(retinylidene)lysine (lysine 296). The Cytoplasmic portion of the chain corresponds to methionine 309–alanine 353. S-palmitoyl cysteine attachment occurs at residues cysteine 322 and cysteine 323. The interval glutamate 331–alanine 353 is disordered. A compositionally biased stretch (low complexity) spans alanine 334–alanine 353.

This sequence belongs to the G-protein coupled receptor 1 family. Opsin subfamily. Phosphorylated on some or all of the serine and threonine residues present in the C-terminal region. In terms of processing, contains one covalently linked retinal chromophore.

It is found in the membrane. Its subcellular location is the cell projection. The protein localises to the cilium. It localises to the photoreceptor outer segment. Photoreceptor required for image-forming vision at low light intensity. While most salt water fish species use retinal as chromophore, most freshwater fish use 3-dehydroretinal, or a mixture of retinal and 3-dehydroretinal. Light-induced isomerization of 11-cis to all-trans retinal triggers a conformational change that activates signaling via G-proteins. Subsequent receptor phosphorylation mediates displacement of the bound G-protein alpha subunit by arrestin and terminates signaling. The protein is Rhodopsin (rho) of Dicentrarchus labrax (European seabass).